The primary structure comprises 1947 residues: DNA-directed RNA polymerase subunit beta' (1947 aa).

Residues Cys119, Cys121, Cys141, and Cys144 each coordinate Zn(2+). 3 residues coordinate Mg(2+): Asp1778, Asp1780, and Asp1782.

It belongs to the RNA polymerase beta' chain family. RpoC1 subfamily. As to quaternary structure, in plastids the minimal PEP RNA polymerase catalytic core is composed of four subunits: alpha, beta, beta', and beta''. When a (nuclear-encoded) sigma factor is associated with the core the holoenzyme is formed, which can initiate transcription. Requires Mg(2+) as cofactor. Zn(2+) serves as cofactor.

It localises to the plastid. The protein localises to the chloroplast. The enzyme catalyses RNA(n) + a ribonucleoside 5'-triphosphate = RNA(n+1) + diphosphate. Its function is as follows. DNA-dependent RNA polymerase catalyzes the transcription of DNA into RNA using the four ribonucleoside triphosphates as substrates. This chain is DNA-directed RNA polymerase subunit beta', found in Oedogonium cardiacum (Filamentous green alga).